Consider the following 336-residue polypeptide: 3-isopropylmalate dehydrogenase (336 aa).

The substrate site is built by arginine 87, arginine 97, arginine 121, and aspartate 211. Residues aspartate 211, aspartate 235, and aspartate 239 each coordinate Mg(2+). 271-283 (GSAPDIAGQGVAD) contributes to the NAD(+) binding site.

The protein belongs to the isocitrate and isopropylmalate dehydrogenases family. LeuB type 2 subfamily. As to quaternary structure, homodimer. Mg(2+) serves as cofactor. It depends on Mn(2+) as a cofactor.

The protein localises to the cytoplasm. The enzyme catalyses (2R,3S)-3-isopropylmalate + NAD(+) = 4-methyl-2-oxopentanoate + CO2 + NADH. It participates in amino-acid biosynthesis; L-leucine biosynthesis; L-leucine from 3-methyl-2-oxobutanoate: step 3/4. In terms of biological role, catalyzes the oxidation of 3-carboxy-2-hydroxy-4-methylpentanoate (3-isopropylmalate) to 3-carboxy-4-methyl-2-oxopentanoate. The product decarboxylates to 4-methyl-2 oxopentanoate. This is 3-isopropylmalate dehydrogenase from Mycobacterium avium (strain 104).